Reading from the N-terminus, the 461-residue chain is Cytochrome c biogenesis protein CcsB (461 aa).

3 consecutive transmembrane segments (helical) span residues 32–52, 91–111, and 178–198; these read LRLAIALLLIIALFSISGTVI, TWWFLSLLVLFGTSLTACTFT, and IGPIIVHIGIVTILLGSIWGA.

It belongs to the Ccs1/CcsB family. In terms of assembly, may interact with CcsA.

Its subcellular location is the cellular thylakoid membrane. Functionally, required during biogenesis of c-type cytochromes (cytochrome c6 and cytochrome f) at the step of heme attachment. This is Cytochrome c biogenesis protein CcsB from Nostoc sp. (strain PCC 7120 / SAG 25.82 / UTEX 2576).